We begin with the raw amino-acid sequence, 410 residues long: Ribulose bisphosphate carboxylase large chain (410 aa).

The substrate site is built by Asn100 and Thr150. Lys152 acts as the Proton acceptor in catalysis. Lys154 provides a ligand contact to substrate. 3 residues coordinate Mg(2+): Lys178, Asp180, and Glu181. N6-carboxylysine is present on Lys178. Residue His271 is the Proton acceptor of the active site. Residues Arg272, His304, and Ser356 each contribute to the substrate site.

Belongs to the RuBisCO large chain family. Type I subfamily. As to quaternary structure, heterohexadecamer of 8 large chains and 8 small chains; disulfide-linked. The disulfide link is formed within the large subunit homodimers. Mg(2+) serves as cofactor. In terms of processing, the disulfide bond which can form in the large chain dimeric partners within the hexadecamer appears to be associated with oxidative stress and protein turnover.

The protein localises to the plastid. Its subcellular location is the chloroplast. It carries out the reaction 2 (2R)-3-phosphoglycerate + 2 H(+) = D-ribulose 1,5-bisphosphate + CO2 + H2O. The catalysed reaction is D-ribulose 1,5-bisphosphate + O2 = 2-phosphoglycolate + (2R)-3-phosphoglycerate + 2 H(+). In terms of biological role, ruBisCO catalyzes two reactions: the carboxylation of D-ribulose 1,5-bisphosphate, the primary event in carbon dioxide fixation, as well as the oxidative fragmentation of the pentose substrate in the photorespiration process. Both reactions occur simultaneously and in competition at the same active site. The chain is Ribulose bisphosphate carboxylase large chain (rbcL) from Gleichenia japonica (Urajiro).